The chain runs to 395 residues: Acetate kinase (395 aa).

Asn7 is a Mg(2+) binding site. Lys14 is an ATP binding site. A substrate-binding site is contributed by Arg85. The Proton donor/acceptor role is filled by Asp142. ATP is bound by residues 202–206 (HLGNG), 277–279 (DMR), and 325–329 (GIGEN). Residue Glu378 participates in Mg(2+) binding.

This sequence belongs to the acetokinase family. In terms of assembly, homodimer. It depends on Mg(2+) as a cofactor. Requires Mn(2+) as cofactor.

It is found in the cytoplasm. It carries out the reaction acetate + ATP = acetyl phosphate + ADP. The protein operates within metabolic intermediate biosynthesis; acetyl-CoA biosynthesis; acetyl-CoA from acetate: step 1/2. Functionally, catalyzes the formation of acetyl phosphate from acetate and ATP. Can also catalyze the reverse reaction. This chain is Acetate kinase, found in Deinococcus geothermalis (strain DSM 11300 / CIP 105573 / AG-3a).